A 276-amino-acid polypeptide reads, in one-letter code: Large ribosomal subunit protein uL2 (276 aa).

The tract at residues 212-276 (NRHRGIRPQT…KLIISRKKHK (65 aa)) is disordered. The span at 257 to 276 (YKTRKKKASDKLIISRKKHK) shows a compositional bias: basic residues.

Belongs to the universal ribosomal protein uL2 family. In terms of assembly, part of the 50S ribosomal subunit. Forms a bridge to the 30S subunit in the 70S ribosome.

Its function is as follows. One of the primary rRNA binding proteins. Required for association of the 30S and 50S subunits to form the 70S ribosome, for tRNA binding and peptide bond formation. It has been suggested to have peptidyltransferase activity; this is somewhat controversial. Makes several contacts with the 16S rRNA in the 70S ribosome. The protein is Large ribosomal subunit protein uL2 of Helicobacter acinonychis (strain Sheeba).